Consider the following 61-residue polypeptide: Small ribosomal subunit protein uS14 (61 aa).

Zn(2+) is bound by residues Cys24, Cys27, Cys40, and Cys43.

Belongs to the universal ribosomal protein uS14 family. Zinc-binding uS14 subfamily. In terms of assembly, part of the 30S ribosomal subunit. Contacts proteins S3 and S10. Zn(2+) serves as cofactor.

In terms of biological role, binds 16S rRNA, required for the assembly of 30S particles and may also be responsible for determining the conformation of the 16S rRNA at the A site. The sequence is that of Small ribosomal subunit protein uS14 from Finegoldia magna (strain ATCC 29328 / DSM 20472 / WAL 2508) (Peptostreptococcus magnus).